Consider the following 204-residue polypeptide: Recombination protein RecR (204 aa).

Residues 61-76 form a C4-type zinc finger; the sequence is CACCNTFSETQVCSTC. The 100-residue stretch at 84-183 folds into the Toprim domain; sequence SLLCIVETPA…KVTRIARGIP (100 aa).

This sequence belongs to the RecR family.

May play a role in DNA repair. It seems to be involved in an RecBC-independent recombinational process of DNA repair. It may act with RecF and RecO. The protein is Recombination protein RecR of Polynucleobacter necessarius subsp. necessarius (strain STIR1).